A 494-amino-acid polypeptide reads, in one-letter code: MKTIAFDSNKYLNLQRDHILERISQFDGKLYMEFGGKMLEDYHAARVLPGYEPDNKIKLLKELKEQVEIVIAINANNIEHSKARGDLGISYDQEVFRLIDKFNTLDIYVGSVVITQYNNQPAADAFRKQLEKNGIASYLHYPIKGYPTDINHIISSEGMGKNDYIKTSRNLIVATAPGPGSGKLATCMSQMYHDQINGVKSGYAKFETFPVWNLPLHHPVNLAYEAATADLDDVNMIDPFHLETYGKTAVNYNRDIEVFPVLNRTFERILSKSPYASPTDMGVNMVGFSIVNEEAAIEASKQEIIRRYYQTLVDFKAERVTESAVKKIELLMNDIGVTPDDRHVTVAAHQKAEQTGQPALALQLPNGQIVTGKTSELFGPTAAVIINAIKTLAKIDKTTHLIEPEYVKPIQGLKVNHLGSHNPRLHSNEILIALAITAMTSEEANLAMKELGNLKGSEAHSTVILTEEDKNVLRKLGVNITFDPVYQHHKLYRK.

Belongs to the UPF0371 family.

The chain is UPF0371 protein M6_Spy1067 from Streptococcus pyogenes serotype M6 (strain ATCC BAA-946 / MGAS10394).